The following is a 3971-amino-acid chain: Mycosubtilin synthase subunit A (3971 aa).

The acyl-CoA ligase stretch occupies residues 160 to 479 (EPEADELAFI…ELEDIDLGRV (320 aa)). Positions 578–653 (TPIHEIETAL…DLAAFLVENH (76 aa)) constitute a Carrier 1 domain. At Ser613 the chain carries O-(pantetheine 4'-phosphoryl)serine. Residues 669–1092 (SKDIAIIGMS…GTNAHVVLEE (424 aa)) enclose the Ketosynthase family 3 (KS3) domain. Catalysis depends on for beta-ketoacyl synthase activity residues Cys843, His974, and His1014. One can recognise a Carrier 2 domain in the interval 1290-1365 (THIESFLKTV…SVVDYLAENV (76 aa)). Residue Ser1324 is modified to O-(pantetheine 4'-phosphoryl)serine. The segment at 1434-1456 (ESEISQDKTSLSPKSVTAKKNSA) is disordered. Residues 1440–1456 (DKTSLSPKSVTAKKNSA) show a composition bias toward polar residues. Positions 1529-1856 (IIAERSDGSR…SYFEQSQVPI (328 aa)) are GSA-AT. Lys1759 is subject to N6-(pyridoxal phosphate)lysine. Residues 1921–1942 (GGFIPEGPDSPNDGGHKEPETY) are disordered. Residues 1938–2240 (EPETYELSPE…NMVPVKNTAS (303 aa)) form a condensation 1 region. Residues 2405–2480 (EPENETELQI…ELANFIRGEK (76 aa)) enclose the Carrier 3 domain. At Ser2440 the chain carries O-(pantetheine 4'-phosphoryl)serine. Positions 2492-2781 (QKAFYRTSPA…QTMGIRTKPQ (290 aa)) are condensation 2. The segment at 2937 to 3823 (PHNDTVCQWF…RNHPAGRKIF (887 aa)) is domain 1 (asparagine-activating). Residues 2967 to 3364 (TYGQLNERVN…KVEAVQKAVV (398 aa)) form an adenylation 1 region. The Carrier 4 domain maps to 3442 to 3517 (PPGNEVESKL…QLANMALRME (76 aa)). Residue Ser3477 is modified to O-(pantetheine 4'-phosphoryl)serine. The condensation 3 stretch occupies residues 3529–3818 (KISYYPVSSA…NTLVIRNHPA (290 aa)).

It belongs to the ATP-dependent AMP-binding enzyme family. The cofactor is pyridoxal 5'-phosphate. Pantetheine 4'-phosphate is required as a cofactor.

This protein is a multifunctional enzyme, able to activate a long chain fatty acid and link it with the amino acid Asn as part of the synthesis of mycosubtilin. The activation sites consist of individual domains. The polypeptide is Mycosubtilin synthase subunit A (mycA) (Bacillus subtilis).